The primary structure comprises 42 residues: Lebocin-like anionic peptide 1 (42 aa).

As to expression, hemolymph.

Its subcellular location is the secreted. Its function is as follows. Antimicrobial protein. Has antibacterial activity against the Gram-positive bacteria M.luteus (MIC=22.7 uM) and L.monocytogenes (MIC=90.9 uM). Lacks antibacterial activity against the Gram-positive bacteria B.circulans, S.aureus, and S.lutea, and the Gram-negative bacteria E.coli D31, E.coli ATCC 25922, and S.typhimurium. Has antifungal activity against A.niger (MIC=90.9 uM) and T.harzianum (MIC=90.9 uM), but lacks antifungal activity against S.cerevisiae, P.pastoris, Z.marxianus, C.albicans, C.fructus, and F.oxysporum. The protein is Lebocin-like anionic peptide 1 of Galleria mellonella (Greater wax moth).